We begin with the raw amino-acid sequence, 616 residues long: Dihydroxy-acid dehydratase 1 (616 aa).

Mg(2+) is bound at residue Asp-81. [2Fe-2S] cluster is bound at residue Cys-122. Asp-123 and Lys-124 together coordinate Mg(2+). Position 124 is an N6-carboxylysine (Lys-124). A [2Fe-2S] cluster-binding site is contributed by Cys-195. Residue Glu-491 participates in Mg(2+) binding. The active-site Proton acceptor is the Ser-517.

The protein belongs to the IlvD/Edd family. Homodimer. The cofactor is [2Fe-2S] cluster. It depends on Mg(2+) as a cofactor.

The enzyme catalyses (2R)-2,3-dihydroxy-3-methylbutanoate = 3-methyl-2-oxobutanoate + H2O. It catalyses the reaction (2R,3R)-2,3-dihydroxy-3-methylpentanoate = (S)-3-methyl-2-oxopentanoate + H2O. The protein operates within amino-acid biosynthesis; L-isoleucine biosynthesis; L-isoleucine from 2-oxobutanoate: step 3/4. It functions in the pathway amino-acid biosynthesis; L-valine biosynthesis; L-valine from pyruvate: step 3/4. Functionally, functions in the biosynthesis of branched-chain amino acids. Catalyzes the dehydration of (2R,3R)-2,3-dihydroxy-3-methylpentanoate (2,3-dihydroxy-3-methylvalerate) into 2-oxo-3-methylpentanoate (2-oxo-3-methylvalerate) and of (2R)-2,3-dihydroxy-3-methylbutanoate (2,3-dihydroxyisovalerate) into 2-oxo-3-methylbutanoate (2-oxoisovalerate), the penultimate precursor to L-isoleucine and L-valine, respectively. The protein is Dihydroxy-acid dehydratase 1 of Bradyrhizobium diazoefficiens (strain JCM 10833 / BCRC 13528 / IAM 13628 / NBRC 14792 / USDA 110).